The chain runs to 371 residues: Protein NDRG2 (371 aa).

Residues 1 to 21 (MAELQEVQITEEKPLLPGQTP) form a disordered region. At A2 the chain carries N-acetylalanine. Phosphothreonine is present on T20. A phosphoserine mark is found at S326 and S328. T330 carries the post-translational modification Phosphothreonine. The residue at position 332 (S332) is a Phosphoserine. T334 bears the Phosphothreonine mark. The segment at 334-371 (TSAASVDGNRSRSRTLSQSSESGTLSSGPPGHTMEVSC) is disordered. S335, S338, and S344 each carry phosphoserine. A compositionally biased stretch (low complexity) spans 347 to 361 (RTLSQSSESGTLSSG). T348 is subject to Phosphothreonine. 4 positions are modified to phosphoserine: S350, S352, S353, and S355. Residue T357 is modified to Phosphothreonine. Position 370 is a phosphoserine (S370).

Belongs to the NDRG family. As to quaternary structure, interacts with CTNNB1. Highly expressed in brain, heart, skeletal muscle and salivary gland, and moderately in kidney and liver. Expressed in dendritic cells, but not in other blood cells. Expression levels are low in pancreatic and liver cancer tissues; absent in meningioma. Expressed in low-grade gliomas but present at low levels in glioblastoma. Isoform 1 and isoform 2 are present in brain neurons and up-regulated in Alzheimer disease (at protein level).

The protein localises to the cytoplasm. The protein resides in the perinuclear region. Its subcellular location is the cell projection. It is found in the growth cone. Its function is as follows. Contributes to the regulation of the Wnt signaling pathway. Down-regulates CTNNB1-mediated transcriptional activation of target genes, such as CCND1, and may thereby act as tumor suppressor. May be involved in dendritic cell and neuron differentiation. The polypeptide is Protein NDRG2 (NDRG2) (Homo sapiens (Human)).